We begin with the raw amino-acid sequence, 279 residues long: Protein phosphatase 1 regulatory subunit 3E (279 aa).

A phosphoserine mark is found at S16 and S33. Residues 28–86 (RSQRPSLEEEPEEEPGEGGTRFGARSRAHAPSRGRRARSAPAGGGGARAPRSRSPDTRK) are disordered. The segment covering 51-65 (ARSRAHAPSRGRRAR) has biased composition (basic residues). Phosphoserine is present on S66. Positions 87 to 90 (RVRF) match the PP1-binding motif motif. The CBM21 domain occupies 154 to 259 (AARLLTQRIC…NNGGRDYALR (106 aa)). The glycogen-binding motif stretch occupies residues 176–198 (GSARVVDLAYEKRVSVRWSADGW). Residues 248–256 (WDNNGGRDY) are substrate-binding motif.

Expressed in skeletal muscle and heart with barely detectable levels in liver.

Its function is as follows. Acts as a glycogen-targeting subunit for PP1. PP1 is involved in glycogen metabolism and contributes to the activation of glycogen synthase leading to an increase in glycogen synthesis. This is Protein phosphatase 1 regulatory subunit 3E (PPP1R3E) from Homo sapiens (Human).